The sequence spans 179 residues: Large ribosomal subunit protein uL6 (179 aa).

This sequence belongs to the universal ribosomal protein uL6 family. Part of the 50S ribosomal subunit.

This protein binds to the 23S rRNA, and is important in its secondary structure. It is located near the subunit interface in the base of the L7/L12 stalk, and near the tRNA binding site of the peptidyltransferase center. The chain is Large ribosomal subunit protein uL6 from Prochlorococcus marinus (strain SARG / CCMP1375 / SS120).